The following is a 491-amino-acid chain: Arginine decarboxylase (491 aa).

At lysine 227 the chain carries N6-(pyridoxal phosphate)lysine.

Belongs to the Orn/Lys/Arg decarboxylase class-I family. The cofactor is pyridoxal 5'-phosphate.

It localises to the cytoplasm. The catalysed reaction is L-arginine + H(+) = agmatine + CO2. Its pathway is amine and polyamine biosynthesis; agmatine biosynthesis; agmatine from L-arginine: step 1/1. Catalyzes the formation of agmatine from arginine. The chain is Arginine decarboxylase (speA) from Halalkalibacterium halodurans (strain ATCC BAA-125 / DSM 18197 / FERM 7344 / JCM 9153 / C-125) (Bacillus halodurans).